A 173-amino-acid chain; its full sequence is Large ribosomal subunit protein uL10 (173 aa).

The protein belongs to the universal ribosomal protein uL10 family. Part of the ribosomal stalk of the 50S ribosomal subunit. The N-terminus interacts with L11 and the large rRNA to form the base of the stalk. The C-terminus forms an elongated spine to which L12 dimers bind in a sequential fashion forming a multimeric L10(L12)X complex.

Forms part of the ribosomal stalk, playing a central role in the interaction of the ribosome with GTP-bound translation factors. The chain is Large ribosomal subunit protein uL10 from Corynebacterium aurimucosum (strain ATCC 700975 / DSM 44827 / CIP 107346 / CN-1) (Corynebacterium nigricans).